The following is a 328-amino-acid chain: Phosphate acyltransferase (328 aa).

Belongs to the PlsX family. As to quaternary structure, homodimer. Probably interacts with PlsY.

It localises to the cytoplasm. It catalyses the reaction a fatty acyl-[ACP] + phosphate = an acyl phosphate + holo-[ACP]. It functions in the pathway lipid metabolism; phospholipid metabolism. In terms of biological role, catalyzes the reversible formation of acyl-phosphate (acyl-PO(4)) from acyl-[acyl-carrier-protein] (acyl-ACP). This enzyme utilizes acyl-ACP as fatty acyl donor, but not acyl-CoA. The chain is Phosphate acyltransferase from Staphylococcus aureus (strain USA300).